The sequence spans 863 residues: Envelope glycoprotein gp160 (863 aa).

An N-terminal signal peptide occupies residues 1 to 31; the sequence is MRVMGIRMNYQHLWKWGIMLLGILMTCSVAE. The Extracellular segment spans residues 32–691; the sequence is DLWVTVYYGV…ITKWLWYIKI (660 aa). Residues Cys-53 and Cys-73 are joined by a disulfide bond. 15 N-linked (GlcNAc...) asparagine; by host glycosylation sites follow: Asn-87, Asn-129, Asn-136, Asn-142, Asn-143, Asn-159, Asn-163, Asn-194, Asn-199, Asn-209, Asn-246, Asn-274, Asn-288, Asn-301, and Asn-307. Disulfide bonds link Cys-118-Cys-217, Cys-125-Cys-208, Cys-130-Cys-160, Cys-230-Cys-259, and Cys-240-Cys-251. Residues 130–159 form a V1 region; sequence CTNAGGNKTTNGNNTTNQEEQMMEKGEMKN. Residues 160–208 form a V2 region; it reads CSFNITTVISDKKKQVHALFYRLDVVPIDDDNSANTSNTNYTNYRLINC. The V3 stretch occupies residues 308–341; that stretch reads CTRPDNKITRQSTPIGLGQALYTTRIKGDIRQAY. Cys-308 and Cys-342 form a disulfide bridge. N-linked (GlcNAc...) asparagine; by host glycosylation is found at Asn-343, Asn-350, and Asn-365. The tract at residues 374–384 is CD4-binding loop; that stretch reads PAGGDPEITTH. 2 cysteine pairs are disulfide-bonded: Cys-388–Cys-452 and Cys-395–Cys-425. Positions 395-425 are V4; that stretch reads CNTSRLFNSTWNSSTWNNDTLNSEGTIKLPC. Residues Asn-396, Asn-402, Asn-406, Asn-412, Asn-455, Asn-468, Asn-469, and Asn-472 are each glycosylated (N-linked (GlcNAc...) asparagine; by host). 2 V5 regions span residues 467–478 and 470–478; these read VNNSTNETFRPG and STNETFRPG. The segment at 519–539 is fusion peptide; that stretch reads AIGLGAVFLGFLGAAGSTMGA. Residues 581–599 are immunosuppression; that stretch reads KQLQARVLAVESYLKDQQL. Residues Cys-605 and Cys-611 are joined by a disulfide bond. Asn-618, Asn-623, Asn-632, and Asn-644 each carry an N-linked (GlcNAc...) asparagine; by host glycan. Residues 640 to 674 adopt a coiled-coil conformation; the sequence is REIDNYTGVIYSLIENSQIQQEKNEQDLLQLDKWA. The segment at 669 to 690 is MPER; binding to GalCer; it reads QLDKWASLWNWFSITKWLWYIK. The chain crosses the membrane as a helical span at residues 692 to 712; it reads FIMIVGGLIGLRIVFTVLSLV. Topologically, residues 713 to 863 are cytoplasmic; the sequence is NRVRQGYSPL…VRQGLERALL (151 aa). The YXXL motif; contains endocytosis signal signature appears at 719–722; sequence YSPL. The disordered stretch occupies residues 729 to 748; that stretch reads PAPRGPDRPEGIEEEGGEQG. Cys-771 is lipidated: S-palmitoyl cysteine; by host. A Di-leucine internalization motif motif is present at residues 862-863; the sequence is LL.

Belongs to the HIV-1 env protein family. As to quaternary structure, the mature envelope protein (Env) consists of a homotrimer of non-covalently associated gp120-gp41 heterodimers. The resulting complex protrudes from the virus surface as a spike. There seems to be as few as 10 spikes on the average virion. Interacts with host CD4, CCR5 and CXCR4. Gp120 also interacts with the C-type lectins CD209/DC-SIGN and CLEC4M/DC-SIGNR (collectively referred to as DC-SIGN(R)). Gp120 and gp41 interact with GalCer. Gp120 interacts with host ITGA4/ITGB7 complex; on CD4+ T-cells, this interaction results in rapid activation of integrin ITGAL/LFA-1, which facilitates efficient cell-to-cell spreading of HIV-1. Gp120 interacts with cell-associated heparan sulfate; this interaction increases virus infectivity on permissive cells and may be involved in infection of CD4- cells. The mature envelope protein (Env) consists of a homotrimer of non-covalently associated gp120-gp41 heterodimers. The resulting complex protrudes from the virus surface as a spike. There seems to be as few as 10 spikes on the average virion. Highly glycosylated by host. The high number of glycan on the protein is reffered to as 'glycan shield' because it contributes to hide protein sequence from adaptive immune system. Post-translationally, palmitoylation of the transmembrane protein and of Env polyprotein (prior to its proteolytic cleavage) is essential for their association with host cell membrane lipid rafts. Palmitoylation is therefore required for envelope trafficking to classical lipid rafts, but not for viral replication. In terms of processing, specific enzymatic cleavages in vivo yield mature proteins. Envelope glycoproteins are synthesized as an inactive precursor that is heavily N-glycosylated and processed likely by host cell furin in the Golgi to yield the mature SU and TM proteins. The cleavage site between SU and TM requires the minimal sequence [KR]-X-[KR]-R. About 2 of the 9 disulfide bonds of gp41 are reduced by P4HB/PDI, following binding to CD4 receptor.

The protein localises to the virion membrane. It is found in the host cell membrane. Its subcellular location is the host endosome membrane. Functionally, oligomerizes in the host endoplasmic reticulum into predominantly trimers. In a second time, gp160 transits in the host Golgi, where glycosylation is completed. The precursor is then proteolytically cleaved in the trans-Golgi and thereby activated by cellular furin or furin-like proteases to produce gp120 and gp41. In terms of biological role, attaches the virus to the host lymphoid cell by binding to the primary receptor CD4. This interaction induces a structural rearrangement creating a high affinity binding site for a chemokine coreceptor like CXCR4 and/or CCR5. Acts as a ligand for CD209/DC-SIGN and CLEC4M/DC-SIGNR, which are respectively found on dendritic cells (DCs), and on endothelial cells of liver sinusoids and lymph node sinuses. These interactions allow capture of viral particles at mucosal surfaces by these cells and subsequent transmission to permissive cells. HIV subverts the migration properties of dendritic cells to gain access to CD4+ T-cells in lymph nodes. Virus transmission to permissive T-cells occurs either in trans (without DCs infection, through viral capture and transmission), or in cis (following DCs productive infection, through the usual CD4-gp120 interaction), thereby inducing a robust infection. In trans infection, bound virions remain infectious over days and it is proposed that they are not degraded, but protected in non-lysosomal acidic organelles within the DCs close to the cell membrane thus contributing to the viral infectious potential during DCs' migration from the periphery to the lymphoid tissues. On arrival at lymphoid tissues, intact virions recycle back to DCs' cell surface allowing virus transmission to CD4+ T-cells. Its function is as follows. Acts as a class I viral fusion protein. Under the current model, the protein has at least 3 conformational states: pre-fusion native state, pre-hairpin intermediate state, and post-fusion hairpin state. During fusion of viral and target intracellular membranes, the coiled coil regions (heptad repeats) assume a trimer-of-hairpins structure, positioning the fusion peptide in close proximity to the C-terminal region of the ectodomain. The formation of this structure appears to drive apposition and subsequent fusion of viral and target cell membranes. Complete fusion occurs in host cell endosomes and is dynamin-dependent, however some lipid transfer might occur at the plasma membrane. The virus undergoes clathrin-dependent internalization long before endosomal fusion, thus minimizing the surface exposure of conserved viral epitopes during fusion and reducing the efficacy of inhibitors targeting these epitopes. Membranes fusion leads to delivery of the nucleocapsid into the cytoplasm. The polypeptide is Envelope glycoprotein gp160 (Human immunodeficiency virus type 1 group M subtype D (isolate Z84) (HIV-1)).